The primary structure comprises 202 residues: MDTPFAKTPSNLLIAGVDEAGRGPLAGPVITAAVILNPEIIIEGLADSKKLSLKKREELYEKIITNCKAFAIARADVEEIDRLNIFRATLLAMQRAINQLSIQPDKVLIDGHCCPDLPYETQAIVQGDQNVPAISAASILAKVTRDREMLKYDAQYPDYGFAIHKGYGTKAHLAAIHRFGITPVHRKSFEPVRQLKLFIPEE.

An RNase H type-2 domain is found at 12-201; the sequence is LLIAGVDEAG…VRQLKLFIPE (190 aa). Residues Asp18, Glu19, and Asp110 each contribute to the a divalent metal cation site.

The protein belongs to the RNase HII family. Mn(2+) is required as a cofactor. Mg(2+) serves as cofactor.

The protein localises to the cytoplasm. It catalyses the reaction Endonucleolytic cleavage to 5'-phosphomonoester.. Functionally, endonuclease that specifically degrades the RNA of RNA-DNA hybrids. The polypeptide is Ribonuclease HII (Coxiella burnetii (strain CbuG_Q212) (Coxiella burnetii (strain Q212))).